A 199-amino-acid polypeptide reads, in one-letter code: NADH-quinone oxidoreductase subunit B 2 (199 aa).

Positions 78, 79, 143, and 173 each coordinate [4Fe-4S] cluster.

The protein belongs to the complex I 20 kDa subunit family. NDH-1 is composed of 14 different subunits. Subunits NuoB, C, D, E, F, and G constitute the peripheral sector of the complex. It depends on [4Fe-4S] cluster as a cofactor.

The protein localises to the cell inner membrane. The enzyme catalyses a quinone + NADH + 5 H(+)(in) = a quinol + NAD(+) + 4 H(+)(out). Its function is as follows. NDH-1 shuttles electrons from NADH, via FMN and iron-sulfur (Fe-S) centers, to quinones in the respiratory chain. The immediate electron acceptor for the enzyme in this species is believed to be ubiquinone. Couples the redox reaction to proton translocation (for every two electrons transferred, four hydrogen ions are translocated across the cytoplasmic membrane), and thus conserves the redox energy in a proton gradient. The polypeptide is NADH-quinone oxidoreductase subunit B 2 (Rhodopseudomonas palustris (strain BisB5)).